Reading from the N-terminus, the 555-residue chain is Small ribosomal subunit protein uS3m (555 aa).

Residues Met-1–Ser-20 form a disordered region.

The protein belongs to the universal ribosomal protein uS3 family.

The protein resides in the mitochondrion. This is Small ribosomal subunit protein uS3m (RPS3) from Brassica napus (Rape).